Reading from the N-terminus, the 364-residue chain is Aminomethyltransferase (364 aa).

Belongs to the GcvT family. In terms of assembly, the glycine cleavage system is composed of four proteins: P, T, L and H.

It catalyses the reaction N(6)-[(R)-S(8)-aminomethyldihydrolipoyl]-L-lysyl-[protein] + (6S)-5,6,7,8-tetrahydrofolate = N(6)-[(R)-dihydrolipoyl]-L-lysyl-[protein] + (6R)-5,10-methylene-5,6,7,8-tetrahydrofolate + NH4(+). Functionally, the glycine cleavage system catalyzes the degradation of glycine. The sequence is that of Aminomethyltransferase from Escherichia coli (strain 55989 / EAEC).